Reading from the N-terminus, the 223-residue chain is Ribose-5-phosphate isomerase A (223 aa).

Substrate is bound by residues 28 to 31 (TGST), 81 to 84 (DGAD), and 94 to 97 (KGGG). The active-site Proton acceptor is the Glu-103. Lys-121 provides a ligand contact to substrate.

This sequence belongs to the ribose 5-phosphate isomerase family. As to quaternary structure, homodimer.

It catalyses the reaction aldehydo-D-ribose 5-phosphate = D-ribulose 5-phosphate. The protein operates within carbohydrate degradation; pentose phosphate pathway; D-ribose 5-phosphate from D-ribulose 5-phosphate (non-oxidative stage): step 1/1. Catalyzes the reversible conversion of ribose-5-phosphate to ribulose 5-phosphate. The chain is Ribose-5-phosphate isomerase A from Herminiimonas arsenicoxydans.